The primary structure comprises 33 residues: uncharacterized protein (33 aa).

A helical membrane pass occupies residues 11–31 (LALVIYMSVVLLLMVGVPLLF).

Its subcellular location is the membrane. This is an uncharacterized protein from Saccharomyces cerevisiae (strain ATCC 204508 / S288c) (Baker's yeast).